A 337-amino-acid chain; its full sequence is Eukaryotic translation initiation factor 3 subunit H (337 aa).

Residues 21 to 153 form the MPN domain; it reads VQCDGLAVMK…LKAYRLTPQA (133 aa).

It belongs to the eIF-3 subunit H family. In terms of assembly, component of the eukaryotic translation initiation factor 3 (eIF-3) complex. The eIF-3 complex interacts with pix. Interacts with mxt.

Its subcellular location is the cytoplasm. Component of the eukaryotic translation initiation factor 3 (eIF-3) complex, which is involved in protein synthesis of a specialized repertoire of mRNAs and, together with other initiation factors, stimulates binding of mRNA and methionyl-tRNAi to the 40S ribosome. The eIF-3 complex specifically targets and initiates translation of a subset of mRNAs involved in cell proliferation. The chain is Eukaryotic translation initiation factor 3 subunit H from Drosophila willistoni (Fruit fly).